The chain runs to 471 residues: Adenosylhomocysteinase (471 aa).

The substrate site is built by Thr60, Asp135, and Glu196. 197–199 provides a ligand contact to NAD(+); the sequence is TTT. 2 residues coordinate substrate: Lys226 and Asp230. Residues Asn231, 260-265, Glu283, Asn318, 339-341, and Asn387 contribute to the NAD(+) site; these read GYGDVG and IGH.

Belongs to the adenosylhomocysteinase family. NAD(+) serves as cofactor.

It is found in the cytoplasm. The catalysed reaction is S-adenosyl-L-homocysteine + H2O = L-homocysteine + adenosine. It participates in amino-acid biosynthesis; L-homocysteine biosynthesis; L-homocysteine from S-adenosyl-L-homocysteine: step 1/1. Its function is as follows. May play a key role in the regulation of the intracellular concentration of adenosylhomocysteine. In Chlorobium phaeovibrioides (strain DSM 265 / 1930) (Prosthecochloris vibrioformis (strain DSM 265)), this protein is Adenosylhomocysteinase.